A 2664-amino-acid chain; its full sequence is Non-reducing polyketide synthase sorB (2664 aa).

The segment at 21–45 (KSAPQSGNTADDIPNAASQPDTTST) is disordered. The segment covering 36–45 (AASQPDTTST) has biased composition (polar residues). An N-terminal acylcarrier protein transacylase domain (SAT) region spans residues 112-281 (ADHARRLAEW…TTPSRIASDL (170 aa)). Cysteine 184 (nucleophile; for transacylase activity) is an active-site residue. Histidine 302 (proton donor/acceptor; for transacylase activity) is an active-site residue. A Ketosynthase family 3 (KS3) domain is found at 428-849 (DNDIAVIGMS…GSNASMVIKQ (422 aa)). Active-site for beta-ketoacyl synthase activity residues include cysteine 596, histidine 731, and histidine 772. The tract at residues 961 to 1276 (CFGGQVSKSV…TQGTRQLADV (316 aa)) is malonyl-CoA:ACP transacylase (MAT) domain. The N-terminal hotdog fold stretch occupies residues 1345–1477 (PGLYTFMGYG…GQLEFHRADD (133 aa)). Residues 1345-1663 (PGLYTFMGYG…FSARSMSELF (319 aa)) enclose the PKS/mFAS DH domain. The product template (PT) domain stretch occupies residues 1376–1548 (VSGYTLGKTV…PSESAGRAVK (173 aa)). The C-terminal hotdog fold stretch occupies residues 1507-1663 (DEVIQGQSIY…FSARSMSELF (157 aa)). Positions 1711 to 1785 (TELWAKLLPV…GILAFLQSTL (75 aa)) constitute a Carrier domain. Serine 1745 is subject to O-(pantetheine 4'-phosphoryl)serine. A disordered region spans residues 1789-1820 (GEDDASQSSDAASSSRNTPPSSNDGILATPSP). A compositionally biased stretch (low complexity) spans 1794–1803 (SQSSDAASSS). Positions 2015–2197 (FQLMADFLSR…DAGYKHVEWT (183 aa)) are methyltransferase domain. The interval 2281-2526 (VTGTTGSLGS…TLRSFPAVEG (246 aa)) is NADPH-binding (R) domain.

Pantetheine 4'-phosphate serves as cofactor.

The protein operates within secondary metabolite biosynthesis. Functionally, non-reducing polyketide synthase; part of the gene cluster that mediates the biosynthesis of sorbicillinoids, a diverse group of yellow secondary metabolites that restrict growth of competing pathogenic fungi but not of bacteria. Sorbicillinoids biosynthesis requires the action of two PKSs. SorA iteratively combines three acetyl units and the growing chain is modified by the ketoacyl reductase subunit, and optional by the enoyl reductase subunit in the second cycle. The polyketide is then handed over to the PKS SorB, which adds three more acetyl units, and two methyl groups. SorB releases an aldehyde, which undergoes spontaneous cyclization resulting in the formation of sorbicillin or 2',3'-dihydrosorbicillin. The monooxygenase sorC oxidizes sorbicillin and 2',3'-dihydrosorbicillin to 2',3'-dihydrosorbicillinol and sorbicillinol, respectively. The oxidoreductase sorD further converts sorbicillinol into oxosorbicillinol. Sorbicillinol is the building block for the other sorbicillinoids such as disorbicillinol, bisvertinolon, and dihydrobisvertinolone. The polypeptide is Non-reducing polyketide synthase sorB (Penicillium rubens (strain ATCC 28089 / DSM 1075 / NRRL 1951 / Wisconsin 54-1255) (Penicillium chrysogenum)).